The sequence spans 1026 residues: Probable DNA-directed RNA polymerase II subunit RPB1 homolog (1026 aa).

Residues cysteine 62, cysteine 65, cysteine 72, histidine 75, cysteine 102, cysteine 105, and cysteine 142 each coordinate Zn(2+). Residues aspartate 588, aspartate 590, and aspartate 592 each coordinate Mg(2+).

The protein belongs to the RNA polymerase beta' chain family.

The enzyme catalyses RNA(n) + a ribonucleoside 5'-triphosphate = RNA(n+1) + diphosphate. In terms of biological role, component of the DNA-dependent RNA polymerase that catalyzes the transcription of DNA into RNA using the four ribonucleoside triphosphates as substrates. Largest and catalytic component of RNA polymerase II which synthesizes mRNA precursors and many functional non-coding RNAs. Forms the polymerase active center together with the second largest subunit. The chain is Probable DNA-directed RNA polymerase II subunit RPB1 homolog from Acheta domesticus (House cricket).